We begin with the raw amino-acid sequence, 596 residues long: MRVSRLMLNTLRDVPAEADIISHQLLVRGGYVKRLTGGIYAYMPLLWKVLKKITSIVEEELSTKGCLQTLLPQLQPSEIWERSGRWKSYTKGEGIMFSLKDRQGKELGLGPTHEEVITQIISQTIHSYKQLPINIFQIQTKFRDEIRPRFGLMRSREFIMKDAYSFHANENDLQSTYSDMRNAYENIFTKCGLDFVCVDADSGAIGGAASQEFMVTAESGEDLILISSDSKYGANQEKAVSIIEEGKLLEPNKPSIIKTPNQKTIDELCNYNDFHPSQIVKVLAYLATCDDNKKYPVLVSIRGDQEINDIKLSNKISQELKQNVLDIRIISNEDMQKQGISNIPFGFIGPDLSDNLLAQSKAWEKKFIRIADNSAKDLKSFICGNNIKDEHKIFYNWNLINTVQMICDIRKAKPGDRCIHDKTQKLQECRGIEIGHIFQLGTKYSKSLNATFTNEKGVEDHFWMGCYGIGISRLAQAAVEQNHDDLGIIWPTSIAPFTVIIIIANIKNNDQKCLAEDIYQKLIQDRVDVLLDDRDERAGIKFKDADLIGIPWRIVAGREASSGLVELHNRKTKITELLDLNSVFKKLSEEFNTEKL.

It belongs to the class-II aminoacyl-tRNA synthetase family. ProS type 1 subfamily. Homodimer.

It localises to the cytoplasm. The catalysed reaction is tRNA(Pro) + L-proline + ATP = L-prolyl-tRNA(Pro) + AMP + diphosphate. Functionally, catalyzes the attachment of proline to tRNA(Pro) in a two-step reaction: proline is first activated by ATP to form Pro-AMP and then transferred to the acceptor end of tRNA(Pro). As ProRS can inadvertently accommodate and process non-cognate amino acids such as alanine and cysteine, to avoid such errors it has two additional distinct editing activities against alanine. One activity is designated as 'pretransfer' editing and involves the tRNA(Pro)-independent hydrolysis of activated Ala-AMP. The other activity is designated 'posttransfer' editing and involves deacylation of mischarged Ala-tRNA(Pro). The misacylated Cys-tRNA(Pro) is not edited by ProRS. This chain is Proline--tRNA ligase, found in Prochlorococcus marinus (strain NATL2A).